The primary structure comprises 424 residues: Vasopressin V1b receptor (424 aa).

Positions 1–22 (MDSGPLWDANPTPRGTLSAPNA) are disordered. Over 1–35 (MDSGPLWDANPTPRGTLSAPNATTPWLGRDEELAK) the chain is Extracellular. Residues 13–22 (PRGTLSAPNA) show a composition bias toward polar residues. An N-linked (GlcNAc...) asparagine glycan is attached at Asn21. A helical transmembrane segment spans residues 36 to 59 (VEIGVLATVLVLATGGNLAVLLTL). Residues 60–71 (GQLGRKRSRMHL) lie on the Cytoplasmic side of the membrane. Residues 72 to 93 (FVLHLALTDLAVALFQVLPQLL) traverse the membrane as a helical segment. The Extracellular portion of the chain corresponds to 94-108 (WDITYRFQGPDLLCR). Cys107 and Cys186 are joined by a disulfide. The helical transmembrane segment at 109–130 (AVKYLQVLSMFASTYMLLAMTL) threads the bilayer. At 131-151 (DRYLAVCHPLRSLQQPGQSTY) the chain is on the cytoplasmic side. A helical transmembrane segment spans residues 152 to 173 (LLIAAPWLLAAIFSLPQVFIFS). The Extracellular segment spans residues 174-201 (LREVIQGSGVLDCWADFGFPWGPRAYLT). The chain crosses the membrane as a helical span at residues 202–222 (WTTLAIFVLPVTMLTACYSLI). The Cytoplasmic segment spans residues 223 to 283 (CHEICKNLKV…RAKIRTVKMT (61 aa)). A helical transmembrane segment spans residues 284-303 (FVIVLAYIACWAPFFSVQMW). The Extracellular segment spans residues 304 to 321 (SVWDKNAPDEDSTNVAFT). A helical membrane pass occupies residues 322–341 (ISMLLGNLNSCCNPWIYMGF). Residues 342–424 (NSHLLPRPLR…GEGTAETIIF (83 aa)) are Cytoplasmic-facing. The tract at residues 398 to 417 (SGRPRPEESPRDLELADGEG) is disordered. Over residues 401–411 (PRPEESPRDLE) the composition is skewed to basic and acidic residues.

This sequence belongs to the G-protein coupled receptor 1 family. Vasopressin/oxytocin receptor subfamily.

It localises to the cell membrane. In terms of biological role, receptor for arginine vasopressin. The activity of this receptor is mediated by G proteins which activate a phosphatidyl-inositol-calcium second messenger system. Functionally, (Microbial infection) During SARS coronavirus-2/SARS-CoV-2 infection, may recognize and internalize the complex formed by AVP/Arg-vasopressin, SARS-CoV-2 spike protein and secreted ACE2 through DNM2/dynamin 2-dependent endocytosis. This is Vasopressin V1b receptor from Homo sapiens (Human).